A 194-amino-acid polypeptide reads, in one-letter code: Peptidyl-tRNA hydrolase (194 aa).

Residue Tyr-17 participates in tRNA binding. His-22 (proton acceptor) is an active-site residue. TRNA-binding residues include Phe-68, Asn-70, and Asn-116.

It belongs to the PTH family. As to quaternary structure, monomer.

It is found in the cytoplasm. It catalyses the reaction an N-acyl-L-alpha-aminoacyl-tRNA + H2O = an N-acyl-L-amino acid + a tRNA + H(+). Functionally, hydrolyzes ribosome-free peptidyl-tRNAs (with 1 or more amino acids incorporated), which drop off the ribosome during protein synthesis, or as a result of ribosome stalling. Its function is as follows. Catalyzes the release of premature peptidyl moieties from peptidyl-tRNA molecules trapped in stalled 50S ribosomal subunits, and thus maintains levels of free tRNAs and 50S ribosomes. This is Peptidyl-tRNA hydrolase from Shewanella woodyi (strain ATCC 51908 / MS32).